We begin with the raw amino-acid sequence, 397 residues long: Tryptophan synthase beta chain (397 aa).

Lysine 91 bears the N6-(pyridoxal phosphate)lysine mark.

The protein belongs to the TrpB family. In terms of assembly, tetramer of two alpha and two beta chains. The cofactor is pyridoxal 5'-phosphate.

The catalysed reaction is (1S,2R)-1-C-(indol-3-yl)glycerol 3-phosphate + L-serine = D-glyceraldehyde 3-phosphate + L-tryptophan + H2O. It participates in amino-acid biosynthesis; L-tryptophan biosynthesis; L-tryptophan from chorismate: step 5/5. In terms of biological role, the beta subunit is responsible for the synthesis of L-tryptophan from indole and L-serine. The polypeptide is Tryptophan synthase beta chain (Bacillus cereus (strain ATCC 14579 / DSM 31 / CCUG 7414 / JCM 2152 / NBRC 15305 / NCIMB 9373 / NCTC 2599 / NRRL B-3711)).